The chain runs to 646 residues: EF-hand calcium-binding domain-containing protein 6 (646 aa).

EF-hand domains are found at residues 1–27, 28–63, 109–144, 214–249, 321–356, and 357–392; these read FLET…FDIP, LTPR…NYSP, DCYQ…CGCS, SSQL…FCHK, SHYH…NVQI, and LTDE…ERAA. Thr29 is subject to Phosphothreonine. Residues 390-452 are disordered; sequence RAATPTATGD…TTAIPGTPPL (63 aa). Over residues 432 to 446 the composition is skewed to polar residues; the sequence is KPQSHPCTAASTTAI. A Phosphoserine modification is found at Ser435. Phosphothreonine is present on residues Thr439 and Thr449. The segment at 448-646 is interaction with PARK7; it reads GTPPLQNCDP…YNDFLRAFLQ (199 aa). 4 EF-hand domains span residues 468 to 503, 504 to 539, 579 to 614, and 615 to 646; these read GCWR…FNLD, ISKE…LLKA, HCWR…YSIN, and LSEE…AFLQ. The segment at 552–646 is interaction with AR; sequence NAHKMKDSGA…YNDFLRAFLQ (95 aa).

Microtubule inner protein component of sperm flagellar doublet microtubules. Binds PARK7. Part of a ternary complex containing PARK7, EFCAB6/DJBP and AR.

The protein localises to the nucleus. Its subcellular location is the cytoplasm. The protein resides in the cytoskeleton. It localises to the flagellum axoneme. Functionally, negatively regulates the androgen receptor by recruiting histone deacetylase complex, and protein DJ-1 antagonizes this inhibition by abrogation of this complex. Microtubule inner protein (MIP) part of the dynein-decorated doublet microtubules (DMTs) in cilia axoneme, which is required for motile cilia beating. This Macaca fascicularis (Crab-eating macaque) protein is EF-hand calcium-binding domain-containing protein 6 (EFCAB6).